We begin with the raw amino-acid sequence, 521 residues long: Bacillolysin (521 aa).

Residues 1-27 (MGLGKKLSVAVAASFMSLTISLPGVQA) form the signal peptide. Positions 28-221 (AENPQLKENL…ILKKQNKVEH (194 aa)) are cleaved as a propeptide — activation peptide. Positions 283 and 360 each coordinate Ca(2+). His364 lines the Zn(2+) pocket. Glu365 is an active-site residue. 2 residues coordinate Zn(2+): His368 and Glu388. Residues Asp399, Asp402, Asp404, Glu407, and Val411 each contribute to the Ca(2+) site. His449 (proton donor) is an active-site residue.

The protein belongs to the peptidase M4 family. It depends on Ca(2+) as a cofactor. Requires Zn(2+) as cofactor.

Its subcellular location is the secreted. It catalyses the reaction Similar, but not identical, to that of thermolysin.. Its function is as follows. Extracellular zinc metalloprotease. This Bacillus amyloliquefaciens (Bacillus velezensis) protein is Bacillolysin (npr).